The chain runs to 243 residues: DNA repair protein RecO (243 aa).

Belongs to the RecO family.

Involved in DNA repair and RecF pathway recombination. The protein is DNA repair protein RecO of Chlamydia trachomatis serovar L2 (strain ATCC VR-902B / DSM 19102 / 434/Bu).